A 283-amino-acid polypeptide reads, in one-letter code: Polyamine aminopropyltransferase (283 aa).

The PABS domain maps to 5-238; that stretch reads STWIDEYHKG…GIWSWTFASE (234 aa). S-methyl-5'-thioadenosine is bound at residue Gln-32. Spermidine-binding residues include His-63 and Asp-87. Residues Glu-107 and 139-140 each bind S-methyl-5'-thioadenosine; that span reads DG. Asp-158 (proton acceptor) is an active-site residue. A spermidine-binding site is contributed by 158-161; that stretch reads DCSD.

It belongs to the spermidine/spermine synthase family. In terms of assembly, homodimer or homotetramer.

It localises to the cytoplasm. It catalyses the reaction S-adenosyl 3-(methylsulfanyl)propylamine + putrescine = S-methyl-5'-thioadenosine + spermidine + H(+). It participates in amine and polyamine biosynthesis; spermidine biosynthesis; spermidine from putrescine: step 1/1. Functionally, catalyzes the irreversible transfer of a propylamine group from the amino donor S-adenosylmethioninamine (decarboxy-AdoMet) to putrescine (1,4-diaminobutane) to yield spermidine. This chain is Polyamine aminopropyltransferase, found in Prochlorococcus marinus (strain MIT 9312).